Consider the following 431-residue polypeptide: Hydroxylamine reductase (431 aa).

Positions 5, 8, 17, and 23 each coordinate [4Fe-4S] cluster. Positions 131, 155, 199, 286, 314, 339, 373, and 375 each coordinate hybrid [4Fe-2O-2S] cluster. A Cysteine persulfide modification is found at Cys286.

It belongs to the HCP family. Requires [4Fe-4S] cluster as cofactor. It depends on hybrid [4Fe-2O-2S] cluster as a cofactor.

The protein resides in the cytoplasm. It catalyses the reaction A + NH4(+) + H2O = hydroxylamine + AH2 + H(+). Its function is as follows. Catalyzes the reduction of hydroxylamine to form NH(3) and H(2)O. The sequence is that of Hydroxylamine reductase from Thermotoga maritima (strain ATCC 43589 / DSM 3109 / JCM 10099 / NBRC 100826 / MSB8).